The primary structure comprises 31 residues: Cyclotide hyen-J (31 aa).

Positions 1-31 (GSVPCGESCVWIPCITSIAGCSCSNKVCYMD) form a cross-link, cyclopeptide (Gly-Asp). Intrachain disulfides connect Cys-5/Cys-21, Cys-9/Cys-23, and Cys-14/Cys-28.

Post-translationally, this is a cyclic peptide. Detected in seeds (at protein level).

Probably participates in a plant defense mechanism. The polypeptide is Cyclotide hyen-J (Pigea enneasperma (Spade flower)).